Consider the following 380-residue polypeptide: Cytochrome b (380 aa).

The next 4 helical transmembrane spans lie at 34–54 (FGSL…LLAT), 78–99 (WLIR…YLHI), 114–134 (WNTG…GYVL), and 179–199 (FFAL…THLT). Positions 84 and 98 each coordinate heme b. Residues His183 and His197 each contribute to the heme b site. A ubiquinone is bound at residue His202. The next 4 membrane-spanning stretches (helical) occupy residues 227 to 247 (PKDL…ALFS), 289 to 309 (LGGV…PFLH), 321 to 341 (LSQL…WVGS), and 348 to 368 (FIII…ILFP).

It belongs to the cytochrome b family. In terms of assembly, the cytochrome bc1 complex contains 11 subunits: 3 respiratory subunits (MT-CYB, CYC1 and UQCRFS1), 2 core proteins (UQCRC1 and UQCRC2) and 6 low-molecular weight proteins (UQCRH/QCR6, UQCRB/QCR7, UQCRQ/QCR8, UQCR10/QCR9, UQCR11/QCR10 and a cleavage product of UQCRFS1). This cytochrome bc1 complex then forms a dimer. Heme b serves as cofactor.

Its subcellular location is the mitochondrion inner membrane. Functionally, component of the ubiquinol-cytochrome c reductase complex (complex III or cytochrome b-c1 complex) that is part of the mitochondrial respiratory chain. The b-c1 complex mediates electron transfer from ubiquinol to cytochrome c. Contributes to the generation of a proton gradient across the mitochondrial membrane that is then used for ATP synthesis. The sequence is that of Cytochrome b (MT-CYB) from Todus todus (Jamaican tody).